Consider the following 320-residue polypeptide: Cytochrome c1-1, heme protein, mitochondrial (320 aa).

The N-terminal 77 residues, 1-77, are a transit peptide targeting the mitochondrion; sequence MSLGKKIRIG…LLSFATIAYS (77 aa). Topologically, residues 78-280 are mitochondrial intermembrane; that stretch reads DEAEHGLECP…WAAEPEMEER (203 aa). One can recognise a Cytochrome c domain in the interval 103-210; the sequence is ASIRRGHQVY…NGQNYVFALL (108 aa). Residues cysteine 116, cysteine 119, histidine 120, and methionine 239 each contribute to the heme c site. A helical transmembrane segment spans residues 281-301; sequence KLMGFKWIFVLSLALLQAAYY. Residues 302–320 are Mitochondrial matrix-facing; that stretch reads RRLRWSVLKSRKLVLDVVN.

Belongs to the cytochrome c family. Component of the ubiquinol-cytochrome c oxidoreductase (cytochrome b-c1 complex, complex III, CIII), a multisubunit enzyme composed of 3 respiratory subunits cytochrome b, cytochrome c1 and Rieske protein, 2 core protein subunits, and additional low-molecular weight protein subunits. The complex exists as an obligatory dimer and forms supercomplexes (SCs) in the inner mitochondrial membrane with cytochrome c oxidase (complex IV, CIV). It depends on heme c as a cofactor. As to expression, in all tissues analyzed.

It is found in the mitochondrion inner membrane. It carries out the reaction a quinol + 2 Fe(III)-[cytochrome c](out) = a quinone + 2 Fe(II)-[cytochrome c](out) + 2 H(+)(out). In terms of biological role, component of the ubiquinol-cytochrome c oxidoreductase, a multisubunit transmembrane complex that is part of the mitochondrial electron transport chain which drives oxidative phosphorylation. The respiratory chain contains 3 multisubunit complexes succinate dehydrogenase (complex II, CII), ubiquinol-cytochrome c oxidoreductase (cytochrome b-c1 complex, complex III, CIII) and cytochrome c oxidase (complex IV, CIV), that cooperate to transfer electrons derived from NADH and succinate to molecular oxygen, creating an electrochemical gradient over the inner membrane that drives transmembrane transport and the ATP synthase. The cytochrome b-c1 complex catalyzes electron transfer from ubiquinol to cytochrome c, linking this redox reaction to translocation of protons across the mitochondrial inner membrane, with protons being carried across the membrane as hydrogens on the quinol. In the process called Q cycle, 2 protons are consumed from the matrix, 4 protons are released into the intermembrane space and 2 electrons are passed to cytochrome c. Cytochrome c1 is a catalytic core subunit containing a c-type heme. It transfers electrons from the [2Fe-2S] iron-sulfur cluster of the Rieske protein to cytochrome c. The protein is Cytochrome c1-1, heme protein, mitochondrial (CYCL) of Solanum tuberosum (Potato).